The following is a 168-amino-acid chain: Small ribosomal subunit protein uS7c (168 aa).

Belongs to the universal ribosomal protein uS7 family. Part of the 30S ribosomal subunit.

It is found in the plastid. The protein resides in the chloroplast. Its function is as follows. One of the primary rRNA binding proteins, it binds directly to 16S rRNA where it nucleates assembly of the head domain of the 30S subunit. This Chlamydomonas reinhardtii (Chlamydomonas smithii) protein is Small ribosomal subunit protein uS7c (rps7).